Consider the following 758-residue polypeptide: MKRRYSILIILLVAIFYRMITFRFKYLLGYDPYFHLAYIEEVNKVGKWINFLTFAGGPWGYQVKLFHPLGLWMTPLYLYKLLKVFGVSLTTTFKITPVIFGVLTVIFLYLSLLKLYDEKRAFFGGFFLAISYGHVFRSMANYYRGDNYMLFWYSVALLGISLALGIKKGKWKYKRLIFYTLPVLASGFSAIFWQAYYPIFAFLLSNALLLAVGAFILKKDKYLLDSIILILSTAFGVLLANYLGGIFGYGMLGYAKWLGKSVAKKLGLEFGYLKDVYLILHLKYLVPISLSFVLVLILLGFLTKDIRIRSLFLGIASFIGIIILFKRFEALKELSTGFGIFKEAPILETQPTSFKDLWAAFSLSFFLTPLFFIRFKKPRVEDFLTLGLIIPSVYMLKTWTRFLFIGSMAIAIMSGIGIVELYEAIKPRLNGKKALATGIITLVILPGVIAGLSFKEVCSLHPEMNEAWERALKWLKNNSNENDVILAWWDWGHFITYYARRSPIAQGGPSVGVALYLLGKLNENWAINLGVDYVIVSYYDFLKFGAILSTANLSKRYNIRGYGLVVLPLRASTGALIFENRGYRAIVRHDKSWNAVIIYNGQMIYPRKLYVEHKEGVQEIKPPESNSNTYLYVNLNYGYAIFMNGNAFNTTLVRLFITPEKPYKLVYSDGGLIKIFKLEHPNVKVERRESNVILNFENGTSLGLYFFLDNGTMVLSKWYNVKGKNEFIVPKVNASVARYVLKRGKKVVDRGVFRLSYN.

The Cytoplasmic segment spans residues 1–6 (MKRRYS). Residues 7 to 27 (ILIILLVAIFYRMITFRFKYL) traverse the membrane as a helical segment. Topologically, residues 28 to 92 (LGYDPYFHLA…KVFGVSLTTT (65 aa)) are extracellular. The short motif at 29-31 (GYD) is the DXD motif 1 element. Asp-31 is a binding site for Mn(2+). The helical transmembrane segment at 93 to 113 (FKITPVIFGVLTVIFLYLSLL) threads the bilayer. At 114–120 (KLYDEKR) the chain is on the cytoplasmic side. The helical transmembrane segment at 121 to 141 (AFFGGFFLAISYGHVFRSMAN) threads the bilayer. At 142–145 (YYRG) the chain is on the extracellular side. Residues Arg-144 and Asp-146 each coordinate Mn(2+). Residues 144–146 (RGD) carry the DXD motif 2 motif. The chain crosses the membrane as a helical span at residues 146–166 (DNYMLFWYSVALLGISLALGI). Topologically, residues 167–175 (KKGKWKYKR) are cytoplasmic. The next 2 membrane-spanning stretches (helical) occupy residues 176-196 (LIFY…WQAY) and 197-217 (YPIF…AFIL). Residues 218-226 (KKDKYLLDS) lie on the Cytoplasmic side of the membrane. A helical transmembrane segment spans residues 227 to 247 (IILILSTAFGVLLANYLGGIF). Over 248 to 281 (GYGMLGYAKWLGKSVAKKLGLEFGYLKDVYLILH) the chain is Extracellular. Residues 282 to 302 (LKYLVPISLSFVLVLILLGFL) traverse the membrane as a helical segment. The Cytoplasmic segment spans residues 303–310 (TKDIRIRS). A helical transmembrane segment spans residues 311 to 331 (LFLGIASFIGIIILFKRFEAL). Residues 332–352 (KELSTGFGIFKEAPILETQPT) lie on the Extracellular side of the membrane. A TIXE motif motif is present at residues 340–343 (IFKE). The helical transmembrane segment at 353 to 373 (SFKDLWAAFSLSFFLTPLFFI) threads the bilayer. The Cytoplasmic segment spans residues 374-379 (RFKKPR). The helical transmembrane segment at 380–400 (VEDFLTLGLIIPSVYMLKTWT) threads the bilayer. A topological domain (extracellular) is located at residue Arg-401. Arg-401 is a binding site for a glycophospholipid. Residues 402-422 (FLFIGSMAIAIMSGIGIVELY) traverse the membrane as a helical segment. The Cytoplasmic portion of the chain corresponds to 423-433 (EAIKPRLNGKK). A helical membrane pass occupies residues 434–454 (ALATGIITLVILPGVIAGLSF). The Extracellular portion of the chain corresponds to 455-758 (KEVCSLHPEM…DRGVFRLSYN (304 aa)). The interval 488–490 (WWD) is interacts with target acceptor peptide in protein substrate. A WWDYG motif motif is present at residues 488–492 (WWDWG). The DK motif motif lies at 540–547 (DFLKFGAI).

It belongs to the STT3 family. Mn(2+) is required as a cofactor. It depends on Mg(2+) as a cofactor.

Its subcellular location is the cell membrane. It carries out the reaction an archaeal dolichyl phosphooligosaccharide + [protein]-L-asparagine = an archaeal dolichyl phosphate + a glycoprotein with the oligosaccharide chain attached by N-beta-D-glycosyl linkage to a protein L-asparagine.. Its pathway is protein modification; protein glycosylation. Its function is as follows. Oligosaccharyl transferase (OST) that catalyzes the initial transfer of a defined glycan (ManNAcXyl(2)GlcAMan(2)GalNAc in Pyrococcus) from the lipid carrier dolichol-monophosphate to an asparagine residue within an Asn-X-Ser/Thr consensus motif in nascent polypeptide chains, the first step in protein N-glycosylation. This Pyrococcus horikoshii (strain ATCC 700860 / DSM 12428 / JCM 9974 / NBRC 100139 / OT-3) protein is Dolichyl-phosphooligosaccharide-protein glycotransferase 2 (aglB2).